A 202-amino-acid polypeptide reads, in one-letter code: Energy-coupling factor transporter transmembrane protein BioN (202 aa).

3 helical membrane-spanning segments follow: residues 21–40 (LLSL…LLLL), 44–63 (VLVA…EALL), and 68–90 (IFLT…AALV).

This sequence belongs to the CbiQ family. As to quaternary structure, part of a biotin transporter complex composed of BioM, BioN and BioY.

It is found in the cell inner membrane. In terms of biological role, involved in biotin uptake. This Rhizobium etli (strain ATCC 51251 / DSM 11541 / JCM 21823 / NBRC 15573 / CFN 42) protein is Energy-coupling factor transporter transmembrane protein BioN (bioN).